The chain runs to 315 residues: Malate dehydrogenase (315 aa).

Residues 7–12 and D32 each bind NAD(+); that span reads GAGNIG. 2 residues coordinate substrate: R81 and R87. Residues N94 and 117 to 119 each bind NAD(+); that span reads VTN. Residues N119 and R150 each contribute to the substrate site. H174 acts as the Proton acceptor in catalysis.

Belongs to the LDH/MDH superfamily. MDH type 3 family.

The catalysed reaction is (S)-malate + NAD(+) = oxaloacetate + NADH + H(+). Its function is as follows. Catalyzes the reversible oxidation of malate to oxaloacetate. The chain is Malate dehydrogenase from Neorickettsia sennetsu (strain ATCC VR-367 / Miyayama) (Ehrlichia sennetsu).